The primary structure comprises 561 residues: Mercuric reductase (561 aa).

Residues 1–65 (MTTLKITGMT…AVAGLGYEAT (65 aa)) enclose the HMA domain. 2 residues coordinate a metal cation: C11 and C14. Positions 110, 130, and 135 each coordinate FAD. A disulfide bridge links C136 with C141. Residues K145, A211, D403, and V411 each coordinate FAD. Positions 558 and 559 each coordinate Hg(2+).

This sequence belongs to the class-I pyridine nucleotide-disulfide oxidoreductase family. Homodimer. FAD serves as cofactor.

The enzyme catalyses Hg + NADP(+) + H(+) = Hg(2+) + NADPH. Its function is as follows. Resistance to Hg(2+) in bacteria appears to be governed by a specialized system which includes mercuric reductase. MerA protein is responsible for volatilizing mercury as Hg(0). The protein is Mercuric reductase (merA) of Acinetobacter calcoaceticus.